The following is a 455-amino-acid chain: 3-isopropylmalate dehydratase large subunit (455 aa).

3 residues coordinate [4Fe-4S] cluster: cysteine 337, cysteine 397, and cysteine 400.

Belongs to the aconitase/IPM isomerase family. LeuC type 1 subfamily. Heterodimer of LeuC and LeuD. [4Fe-4S] cluster serves as cofactor.

It carries out the reaction (2R,3S)-3-isopropylmalate = (2S)-2-isopropylmalate. It participates in amino-acid biosynthesis; L-leucine biosynthesis; L-leucine from 3-methyl-2-oxobutanoate: step 2/4. Its function is as follows. Catalyzes the isomerization between 2-isopropylmalate and 3-isopropylmalate, via the formation of 2-isopropylmaleate. The sequence is that of 3-isopropylmalate dehydratase large subunit from Leuconostoc citreum (strain KM20).